The chain runs to 903 residues: DNA mismatch repair protein MutS (903 aa).

Residue 655-662 (GPNMAGKS) participates in ATP binding.

It belongs to the DNA mismatch repair MutS family.

In terms of biological role, this protein is involved in the repair of mismatches in DNA. It is possible that it carries out the mismatch recognition step. This protein has a weak ATPase activity. This is DNA mismatch repair protein MutS from Caulobacter vibrioides (strain ATCC 19089 / CIP 103742 / CB 15) (Caulobacter crescentus).